A 926-amino-acid polypeptide reads, in one-letter code: BTB/POZ domain-containing protein KCTD19 (926 aa).

Residues 18–72 form the BTB 1 domain; that stretch reads NVGGWHFSVPRSKLSQFPDSLLWKEASALTSSESQRLFIDRDGSTFRHVHYYLYT. The residue at position 270 (Ser270) is a Phosphoserine. In terms of domain architecture, BTB 2 spans 398–485; sequence IKVYVGSHWY…YHIPSLSEAL (88 aa). The disordered stretch occupies residues 673 to 751; the sequence is GSEAASQPST…PAPEQPLPEA (79 aa). A compositionally biased stretch (basic and acidic residues) spans 730 to 742; the sequence is DWSKQRTKERESP.

As to quaternary structure, identified in a complex with ZNF541, HDAC1 and HSPA2. Identified in a complex with ZNF541 and HDAC1. Identified in a complex with HDAC1, HDAC2, DNTTIP1 and ZNF541.

The protein localises to the nucleus. Transcription regulator which is essential for male fertility and for the completion of meiotic prophase in spermatocytes. Regulates progression of the pachytene stage of meiotic prophase and promotes the transcriptional activation activity ZNF541. Required for the organization of chromosomes during metaphase I. This Homo sapiens (Human) protein is BTB/POZ domain-containing protein KCTD19 (KCTD19).